Here is a 96-residue protein sequence, read N- to C-terminus: uncharacterized protein (96 aa).

Positions 10, 16, and 55 each coordinate [3Fe-4S] cluster. Residues 67–96 form a disordered region; the sequence is AGDGERASADPAPSPAEAERHAAKDQHNLG. Positions 83 to 96 are enriched in basic and acidic residues; sequence EAERHAAKDQHNLG.

[3Fe-4S] cluster is required as a cofactor.

Its function is as follows. Electron transport protein for the cytochrome systems. This is an uncharacterized protein from Bradyrhizobium diazoefficiens (strain JCM 10833 / BCRC 13528 / IAM 13628 / NBRC 14792 / USDA 110).